Here is a 480-residue protein sequence, read N- to C-terminus: Uridine 5'-monophosphate synthase (480 aa).

The residue at position 2 (Ala2) is an N-acetylalanine. The segment at Ala2–Ser214 is OPRTase. Tyr37 carries the phosphotyrosine modification. Ser214 carries the post-translational modification Phosphoserine. The domain linker stretch occupies residues Pro215–Glu220. The interval Ala221 to Val480 is OMPdecase. Position 257 (Ser257) interacts with orotidine 5'-phosphate. UMP contacts are provided by residues Ser257, Asp259, and Lys281 to His283. Position 281 (Lys281) interacts with orotidine 5'-phosphate. Residues Asp312, Lys314, and Asp317 each act as for OMPdecase activity in the active site. Orotidine 5'-phosphate contacts are provided by residues Lys314, Asp317, Thr321, Ser372, Gln430–Tyr432, and Gly450–Arg451. UMP-binding positions include Asp317, Thr321, Ser372, Gln430 to Tyr432, and Gly450 to Arg451.

The protein in the N-terminal section; belongs to the purine/pyrimidine phosphoribosyltransferase family. It in the C-terminal section; belongs to the OMP decarboxylase family. As to quaternary structure, homodimer; dimerization is required for enzymatic activity.

It carries out the reaction orotidine 5'-phosphate + diphosphate = orotate + 5-phospho-alpha-D-ribose 1-diphosphate. The enzyme catalyses orotidine 5'-phosphate + H(+) = UMP + CO2. It participates in pyrimidine metabolism; UMP biosynthesis via de novo pathway; UMP from orotate: step 1/2. Its pathway is pyrimidine metabolism; UMP biosynthesis via de novo pathway; UMP from orotate: step 2/2. Its function is as follows. Bifunctional enzyme catalyzing the last two steps of de novo pyrimidine biosynthesis, orotate phosphoribosyltransferase (OPRT), which converts orotate to orotidine-5'-monophosphate (OMP), and orotidine-5'-monophosphate decarboxylase (ODC), the terminal enzymatic reaction that decarboxylates OMP to uridine monophosphate (UMP). The protein is Uridine 5'-monophosphate synthase of Homo sapiens (Human).